Consider the following 484-residue polypeptide: BAHD acyltransferase DCR (484 aa).

The active-site Proton acceptor is the His-168. Residues 211-233 (LDLTAPKDPNETSNGEDAANPTV) are disordered. Asp-394 (proton acceptor) is an active-site residue. Residues 452 to 484 (EEEEDDGKKLTNGNGHVNGNGNGYVNGNGNGFV) are disordered. Gly residues predominate over residues 467–484 (HVNGNGNGYVNGNGNGFV).

The protein belongs to the plant acyltransferase family. As to expression, expressed in root caps and lateral root emerging sites, in trichomes, in epidermis in stems, sepals and anther filaments, and in pollen grains and torpedo stage seeds.

It is found in the cytoplasm. The protein localises to the cytosol. Functionally, required for incorporation of 9(10),16-dihydroxy-hexadecanoic acid into cutin. In Arabidopsis thaliana (Mouse-ear cress), this protein is BAHD acyltransferase DCR (DCR).